Consider the following 119-residue polypeptide: Large ribosomal subunit protein bL20 (119 aa).

This sequence belongs to the bacterial ribosomal protein bL20 family.

Functionally, binds directly to 23S ribosomal RNA and is necessary for the in vitro assembly process of the 50S ribosomal subunit. It is not involved in the protein synthesizing functions of that subunit. This is Large ribosomal subunit protein bL20 from Clostridium tetani (strain Massachusetts / E88).